The primary structure comprises 149 residues: Evolved beta-galactosidase subunit beta (149 aa).

As to quaternary structure, heterooctamer of 4 alpha and 4 beta subunits.

Its function is as follows. Required for full activity of the EbgA enzyme. Exact function not known. The sequence is that of Evolved beta-galactosidase subunit beta (ebgC) from Escherichia coli O6:H1 (strain CFT073 / ATCC 700928 / UPEC).